A 997-amino-acid polypeptide reads, in one-letter code: Signal peptide, CUB and EGF-like domain-containing protein 2 (997 aa).

Positions 1–28 (MGVAGCGRPREARALLLLLLLLPPLLAA) are cleaved as a signal peptide. The region spanning 43–83 (DVDECAQGLDDCHADALCQNTPTSYKCSCKPGYQGEGRQCE) is the EGF-like 1; calcium-binding domain. Disulfide bonds link Cys-47-Cys-60, Cys-54-Cys-69, Cys-71-Cys-82, Cys-88-Cys-100, Cys-96-Cys-109, Cys-111-Cys-124, Cys-130-Cys-141, and Cys-137-Cys-150. The EGF-like 2; calcium-binding domain maps to 84–125 (DMDECDNTLNGGCVHDCLNIPGNYRCTCFDGFMLAHDGHNCL). In terms of domain architecture, EGF-like 3; calcium-binding spans 126–162 (DMDECLENNGGCQHICTNVIGSYECRCKEGFFLSDNQ). EGF-like domains follow at residues 175 to 211 (CMNK…QKDC), 215 to 250 (CNHG…GRSC), and 284 to 319 (CAVN…GKTC). One can recognise an EGF-like 7; calcium-binding domain in the interval 321 to 361 (DIDECQTRNGGCNHFCKNTVGSFDCSCKKGFKLLTDEKSCQ). Disulfide bonds link Cys-325–Cys-336, Cys-332–Cys-345, Cys-347–Cys-360, Cys-366–Cys-376, Cys-372–Cys-385, Cys-387–Cys-399, Cys-405–Cys-416, Cys-412–Cys-425, and Cys-427–Cys-440. The 39-residue stretch at 362–400 (DVDECSLERTCDHSCINHPGTFICACNPGYTLYSFTHCG) folds into the EGF-like 8; calcium-binding domain. Positions 401 to 441 (DTNECSVNNGGCQQVCINTVGSYECQCHPGFKLHWNKKDCV) constitute an EGF-like 9; calcium-binding domain. Asn-657 carries N-linked (GlcNAc...) asparagine glycosylation. Cys-807 and Cys-833 are oxidised to a cystine. One can recognise a CUB domain in the interval 807-919 (CGGELGDFTG…RGFQVPYVTY (113 aa)). An interaction with the cholesterol-anchor of SHH region spans residues 845–854 (ILIVVPEIFL). Cys-860 and Cys-881 form a disulfide bridge.

In terms of assembly, interacts with SHH via the cholesterol anchor of the dually lipid-modified SHH (ShhNp). Interacts with PTCH1. Forms homooligomers and heterooligomers with SCUBE1 and SCUBE3. Interacts with VEGFR2. N-glycosylated. As to expression, expressed in adult heart, lung and testis.

It is found in the secreted. The protein localises to the cell surface. Functionally, lipid-binding protein required for SHH long-range signaling by binding to the dually lipid-modified SHH (ShhNp) and by promoting ShhNp mobilization, solubilization and release from the cell membrane. Acts by enhancing the proteolytic processing (shedding) of the lipid-modified N- and C- terminal of ShhNp at the cell surface. Synergizes with DISP1 to cause an increase in SHH secretion. Probable cell surface coreceptor for VEGFR2 involved in VEGFR2-mediated angiogenesis. The polypeptide is Signal peptide, CUB and EGF-like domain-containing protein 2 (Mus musculus (Mouse)).